The primary structure comprises 187 residues: Ribosome-recycling factor (187 aa).

Belongs to the RRF family.

The protein resides in the cytoplasm. Functionally, responsible for the release of ribosomes from messenger RNA at the termination of protein biosynthesis. May increase the efficiency of translation by recycling ribosomes from one round of translation to another. The sequence is that of Ribosome-recycling factor from Nitrosococcus oceani (strain ATCC 19707 / BCRC 17464 / JCM 30415 / NCIMB 11848 / C-107).